Reading from the N-terminus, the 410-residue chain is Histidine--tRNA ligase (410 aa).

The protein belongs to the class-II aminoacyl-tRNA synthetase family.

The protein localises to the cytoplasm. The catalysed reaction is tRNA(His) + L-histidine + ATP = L-histidyl-tRNA(His) + AMP + diphosphate + H(+). The chain is Histidine--tRNA ligase from Methanocorpusculum labreanum (strain ATCC 43576 / DSM 4855 / Z).